Reading from the N-terminus, the 157-residue chain is Small ribosomal subunit protein uS7 (157 aa).

Belongs to the universal ribosomal protein uS7 family. As to quaternary structure, part of the 30S ribosomal subunit. Contacts proteins S9 and S11.

Its function is as follows. One of the primary rRNA binding proteins, it binds directly to 16S rRNA where it nucleates assembly of the head domain of the 30S subunit. Is located at the subunit interface close to the decoding center, probably blocks exit of the E-site tRNA. In Eikenella corrodens, this protein is Small ribosomal subunit protein uS7.